The chain runs to 452 residues: Keratin, type I cytoskeletal 15 (452 aa).

The interval Met-1–Asn-97 is head. Phosphoserine occurs at positions 15, 16, 28, 33, and 47. The coil 1A stretch occupies residues Glu-98 to Trp-133. The region spanning Glu-98–Met-410 is the IF rod domain. Residue Thr-124 is modified to Phosphothreonine. Residues Tyr-134–Thr-152 are linker 1. Residues Met-153–Phe-244 form a coil 1B region. The segment at Ser-245–Leu-264 is linker 12. Residues Thr-265–Gln-406 form a coil 2 region. Residue Lys-293 forms a Glycyl lysine isopeptide (Lys-Gly) (interchain with G-Cter in SUMO2) linkage. Thr-294 and Thr-316 each carry phosphothreonine. A tail region spans residues Asp-407–Ile-452. The segment at Ile-413–Ile-452 is disordered. Lys-443 is covalently cross-linked (Glycyl lysine isopeptide (Lys-Gly) (interchain with G-Cter in SUMO1); alternate). Lys-443 participates in a covalent cross-link: Glycyl lysine isopeptide (Lys-Gly) (interchain with G-Cter in SUMO2); alternate.

It belongs to the intermediate filament family. As to quaternary structure, heterotetramer of two type I and two type II keratins. Forms a heterodimer with KRT14. Interacts with PLEC isoform 1C, when in a heterodimer with KRT14. Interacts with NOD2. Expressed strongly in the basal cell layer at the tips of rete-like prominences (RLPs) of adult dorsal tongue, outer root sheath (ORS) of hair follicle and skin epidermis (at protein level).

In the absence of KRT14, makes a bona fide, but ultrastructurally distinct keratin filament network with KRT5. The sequence is that of Keratin, type I cytoskeletal 15 (Krt15) from Mus musculus (Mouse).